The chain runs to 758 residues: Probable serine/threonine-protein kinase HAL5-like (758 aa).

Disordered stretches follow at residues methionine 1 to aspartate 170 and isoleucine 189 to arginine 252. The segment covering arginine 22–aspartate 57 has biased composition (polar residues). Basic and acidic residues predominate over residues asparagine 58 to glutamate 69. Residues serine 129–alanine 153 show a composition bias toward low complexity. Over residues aspartate 216–isoleucine 226 the composition is skewed to basic and acidic residues. Residues arginine 227–asparagine 247 are compositionally biased toward polar residues. The 303-residue stretch at lysine 442–methionine 744 folds into the Protein kinase domain. Residues leucine 448–valine 456 and lysine 485 each bind ATP. The active-site Proton acceptor is aspartate 595.

This sequence belongs to the protein kinase superfamily. CAMK Ser/Thr protein kinase family. NPR/HAL subfamily. HAL5 sub-subfamily.

It carries out the reaction L-seryl-[protein] + ATP = O-phospho-L-seryl-[protein] + ADP + H(+). The catalysed reaction is L-threonyl-[protein] + ATP = O-phospho-L-threonyl-[protein] + ADP + H(+). This is Probable serine/threonine-protein kinase HAL5-like from Vanderwaltozyma polyspora (strain ATCC 22028 / DSM 70294 / BCRC 21397 / CBS 2163 / NBRC 10782 / NRRL Y-8283 / UCD 57-17) (Kluyveromyces polysporus).